The primary structure comprises 149 residues: Transcriptional repressor NrdR (149 aa).

The segment at 3–34 (CPFCAAVDTKVIDSRLVGDGSQVRRRRQCLEC) is a zinc-finger region. The ATP-cone domain maps to 49 to 139 (PRVIKSDDIR…VYRSFEDIRE (91 aa)).

This sequence belongs to the NrdR family. Zn(2+) is required as a cofactor.

Functionally, negatively regulates transcription of bacterial ribonucleotide reductase nrd genes and operons by binding to NrdR-boxes. The polypeptide is Transcriptional repressor NrdR (Photorhabdus laumondii subsp. laumondii (strain DSM 15139 / CIP 105565 / TT01) (Photorhabdus luminescens subsp. laumondii)).